Reading from the N-terminus, the 399-residue chain is MAQRAFPNPYADYNKSLAEGYFDSAGRLTPEFSQRLNNKIRELLQQMERGLKSADPRDSTVYTGWAGIAVLYLHLYDVFGDPNYLQMAHGYVKQSLNSLSKHSITFLCGDGGPLAVAAVVHHKMNNEKQAEECITRLIHLNKIDPHAPSEMLYGRMGYISALLFVNKNFGEEKIPQSHIQQICETVLTSGEDLARKRRFTGKTPLMYEWYQEYYVGAAHGLAGIYYYLMQPSLQVSHAKLHNLVKPSVDYVCQLKFPSGNYPPCVDDSRDLLIHWCHGAPGVIYMLTQAYKVFKEERYLNDAYQCADVIWQYGLLKKGYGLCHGTAGNAYAFLSLYSLTQDAKYLYRACKFAEWCLDYGEHGCRTPDTPFSLFEGMAGTIYFLADLLVPTKARFPAFEL.

Ala2 bears the N-acetylalanine mark. Lys142 is subject to N6-acetyllysine. Cys276 is a Zn(2+) binding site. Position 317 (Lys317) interacts with glutathione. 2 residues coordinate Zn(2+): Cys322 and His323. 364–367 (RTPD) is a glutathione binding site.

It belongs to the LanC-like protein family. As to quaternary structure, interacts with the C-terminal of STOM. Interacts with the EPS8 SH3 domain. Interaction with EPS8 is inhibited by glutathione binding. In terms of tissue distribution, expressed in brain.

Its subcellular location is the cytoplasm. The protein resides in the cell membrane. It catalyses the reaction RX + glutathione = an S-substituted glutathione + a halide anion + H(+). The enzyme catalyses 1-chloro-2,4-dinitrobenzene + glutathione = 2,4-dinitrophenyl-S-glutathione + chloride + H(+). Its function is as follows. Functions as a glutathione transferase. Catalyzes conjugation of the glutathione (GSH) to artificial substrates 1-chloro-2,4-dinitrobenzene (CDNB) and p-nitrophenyl acetate. Mitigates neuronal oxidative stress during normal postnatal development and in response to oxidative stresses probably through GSH antioxidant defense mechanism. May play a role in EPS8 signaling. Binds glutathione. The protein is Glutathione S-transferase LANCL1 (LANCL1) of Bos taurus (Bovine).